The primary structure comprises 539 residues: Chaperone Ric-8A (539 aa).

The interval 507–539 (MGITPSGNLAPMENAIRDMADERSSSDSDLGLD) is disordered. Residues 521–532 (AIRDMADERSSS) show a composition bias toward basic and acidic residues.

Belongs to the synembryn family.

The protein resides in the cytoplasm. It localises to the cell cortex. In terms of biological role, chaperone that specifically binds and folds nascent G alpha proteins prior to G protein heterotrimer formation, promoting their stability and activity: folds GNAI1, GNAO1, GNA13 and GNAQ. Does not fold G(s) G-alpha proteins GNAS nor GNAL. Also acts as a guanine nucleotide exchange factor (GEF) for G alpha proteins by stimulating exchange of bound GDP for free GTP. This is Chaperone Ric-8A (RIC8A) from Gallus gallus (Chicken).